Reading from the N-terminus, the 196-residue chain is Small ribosomal subunit protein uS4c (196 aa).

Positions 16 to 40 (GALPGLTRKTPKSGSNLKKKFHSGK) are disordered. Residues 89 to 152 (MRLDNTLFRL…RSKDLVRNSI (64 aa)) form the S4 RNA-binding domain.

The protein belongs to the universal ribosomal protein uS4 family. As to quaternary structure, part of the 30S ribosomal subunit. Contacts protein S5. The interaction surface between S4 and S5 is involved in control of translational fidelity.

The protein resides in the plastid. Its subcellular location is the chloroplast. Functionally, one of the primary rRNA binding proteins, it binds directly to 16S rRNA where it nucleates assembly of the body of the 30S subunit. With S5 and S12 plays an important role in translational accuracy. The sequence is that of Small ribosomal subunit protein uS4c (rps4) from Anthoxanthum odoratum (Sweet vernal grass).